A 189-amino-acid polypeptide reads, in one-letter code: CDP-archaeol synthase (189 aa).

Helical transmembrane passes span 6-26 (VAIA…AVLA), 71-91 (GVVL…TVGV), 96-116 (IAAA…ASFL), 125-145 (GAAF…ALTA), and 162-184 (VAIF…AFGL).

It belongs to the CDP-archaeol synthase family. Requires Mg(2+) as cofactor.

The protein resides in the cell membrane. The enzyme catalyses 2,3-bis-O-(geranylgeranyl)-sn-glycerol 1-phosphate + CTP + H(+) = CDP-2,3-bis-O-(geranylgeranyl)-sn-glycerol + diphosphate. It functions in the pathway membrane lipid metabolism; glycerophospholipid metabolism. Its function is as follows. Catalyzes the formation of CDP-2,3-bis-(O-geranylgeranyl)-sn-glycerol (CDP-archaeol) from 2,3-bis-(O-geranylgeranyl)-sn-glycerol 1-phosphate (DGGGP) and CTP. This reaction is the third ether-bond-formation step in the biosynthesis of archaeal membrane lipids. In Natronomonas pharaonis (strain ATCC 35678 / DSM 2160 / CIP 103997 / JCM 8858 / NBRC 14720 / NCIMB 2260 / Gabara) (Halobacterium pharaonis), this protein is CDP-archaeol synthase.